The following is an 84-amino-acid chain: Beta-defensin 119 (84 aa).

The first 21 residues, 1–21 (MKFLFLFLAILLATEVPVISG), serve as a signal peptide directing secretion. 3 cysteine pairs are disulfide-bonded: Cys28-Cys55, Cys35-Cys49, and Cys39-Cys56.

It belongs to the beta-defensin family. In terms of tissue distribution, abundant expression in the male reproductive tract only. Expressed abundantly in testis, while expression in epididymis decreased gradually from caput to cauda.

The protein localises to the secreted. Has antibacterial activity. In Macaca mulatta (Rhesus macaque), this protein is Beta-defensin 119 (DEFB119).